A 118-amino-acid chain; its full sequence is Elongin-B (118 aa).

Residue Met1 is modified to N-acetylmethionine. The 66-residue stretch at 1 to 66 folds into the Ubiquitin-like domain; the sequence is MDVFLMIRRH…LGECGFTSQT (66 aa). Residue Thr84 is modified to Phosphothreonine. A disordered region spans residues 92–118; that stretch reads PFSSPPELPDVMKPQDSGSSANEQAVQ. Residues 107–118 are compositionally biased toward polar residues; sequence DSGSSANEQAVQ. Residues Ser108 and Ser111 each carry the phosphoserine modification.

Belongs to the Elongin B family. As to quaternary structure, heterotrimer of an A (ELOA, ELOA2 or ELOA3P), ELOB and ELOC subunit. The elongin BC complex interacts with EPOP; leading to recruit the elongin BC complex to Polycomb group (PcG) target genes, thereby restricting excessive activity of the PRC2/EED-EZH2 complex. Component of multiple cullin-RING E3 ubiquitin-protein ligase complexes composed of Elongin BC (ELOB and ELOC), a cullin (either CUL2 or CUL5), a catalytic subunit (either RBX1 or RNF7/RBX2), as well as a substrate adapter protein that can be either ASB2, ASB9, ASB11, KLHDC2, KLHDC3, KLHDC10, APPBP2, FEM1A, FEM1B, FEM1C, LRR1, PCMTD1, SOCS1, SOCS2, SOCS5, SPSB1, SPSB3, ELOA, VHL, WSB1 or RAB40C. As part of the Elongin BC E3 ubiquitin ligase complex; interacts with NRBP1. May also interact with DCUN1D1, DCUN1D2, DCUN1D3 and DCUN1D5. May form oligomers as a KLHDC2/KLHDC3-ELOB-ELOC complex; this interaction is autoinhibitory for the E3 ligase complex as the substrate-binding site of KLHDC2/KLHDC3 is blocked in the oligomer. (Microbial infection) Following infection by HIV-1 virus, component of a cullin-5-RING E3 ubiquitin-protein ligase complex (ECS complex) hijacked by the HIV-1 Vif protein. In terms of assembly, (Microbial infection) Substrate adapter protein can be a viral protein such as HIV Vif. As to quaternary structure, (Microbial infection) Interacts with molluscum contagiosum virus MC132. (Microbial infection) Interacts with herpes virus 8 virus protein LANA1.

The protein resides in the nucleus. The protein operates within protein modification; protein ubiquitination. In terms of biological role, SIII, also known as elongin, is a general transcription elongation factor that increases the RNA polymerase II transcription elongation past template-encoded arresting sites. Subunit A is transcriptionally active and its transcription activity is strongly enhanced by binding to the dimeric complex of the SIII regulatory subunits B and C (elongin BC complex). In embryonic stem cells, the elongin BC complex is recruited by EPOP to Polycomb group (PcG) target genes in order generate genomic region that display both active and repressive chromatin properties, an important feature of pluripotent stem cells. Its function is as follows. Core component of multiple cullin-2 and cullin-5-RING E3 ubiquitin-protein ligase complexes (ECS complexes), which mediate the ubiquitination of target proteins. By binding to BC-box motifs it seems to link target recruitment subunits, like VHL and members of the SOCS box family, to Cullin/RBX1 modules that activate E2 ubiquitination enzymes. Component the von Hippel-Lindau ubiquitination complex CBC(VHL). A number of ECS complexes (containing either KLHDC2, KLHDC3, KLHDC10, APPBP2, FEM1A, FEM1B or FEM1C as substrate-recognition component) are part of the DesCEND (destruction via C-end degrons) pathway, which recognizes a C-degron located at the extreme C terminus of target proteins, leading to their ubiquitination and degradation. The ECS(ASB9) complex mediates ubiquitination and degradation of CKB. As part of a multisubunit ubiquitin ligase complex, polyubiquitinates monoubiquitinated POLR2A. ECS(LRR1) ubiquitinates MCM7 and promotes CMG replisome disassembly by VCP and chromatin extraction during S-phase. As part of the ECS(RAB40C) complex, mediates ANKRD28 ubiquitination and degradation, thereby inhibiting protein phosphatase 6 (PP6) complex activity and focal adhesion assembly during cell migration. (Microbial infection) Following infection by HIV-1 virus, component of a cullin-5-RING E3 ubiquitin-protein ligase complex (ECS complex) hijacked by the HIV-1 Vif protein, which catalyzes ubiquitination and degradation of APOBEC3F and APOBEC3G. The complex can also ubiquitinate APOBEC3H to some extent. In Homo sapiens (Human), this protein is Elongin-B.